Reading from the N-terminus, the 90-residue chain is Sec-independent protein translocase protein TatA (90 aa).

The chain crosses the membrane as a helical span at residues Met1–Gly21. Residues Glu42–Lys60 are compositionally biased toward basic and acidic residues. The disordered stretch occupies residues Glu42–Lys90. Polar residues predominate over residues Ser61–Thr75.

This sequence belongs to the TatA/E family. The Tat system comprises two distinct complexes: a TatABC complex, containing multiple copies of TatA, TatB and TatC subunits, and a separate TatA complex, containing only TatA subunits. Substrates initially bind to the TatABC complex, which probably triggers association of the separate TatA complex to form the active translocon.

The protein localises to the cell membrane. Functionally, part of the twin-arginine translocation (Tat) system that transports large folded proteins containing a characteristic twin-arginine motif in their signal peptide across membranes. TatA could form the protein-conducting channel of the Tat system. This is Sec-independent protein translocase protein TatA from Saccharopolyspora erythraea (strain ATCC 11635 / DSM 40517 / JCM 4748 / NBRC 13426 / NCIMB 8594 / NRRL 2338).